We begin with the raw amino-acid sequence, 122 residues long: Nodulation protein NolR (122 aa).

Positions 15-109 constitute an HTH arsR-type domain; it reads EKHEDAEIAA…ALSDIYGDDT (95 aa). Positions 49–68 form a DNA-binding region, H-T-H motif; sequence VGALAHKVGLSQSALSQHLS.

Binds to the operator site in homodimeric form.

Functionally, negative transacting factor controlling the nod regulon. May control the expression of nodD1, nodD2, nodD3 and nodABC genes. In Rhizobium meliloti (Ensifer meliloti), this protein is Nodulation protein NolR (nolR).